The following is a 286-amino-acid chain: 4-hydroxybenzoate octaprenyltransferase (286 aa).

A run of 8 helical transmembrane segments spans residues 20-40, 43-63, 96-116, 142-162, 167-187, 210-230, 235-255, and 266-286; these read IGTLLLLWPCLMALVLAAGGM, LKVLIIFIIGVVIMRACGCII, LFVILGLAAFGLVLLLNGLVV, FLGVVWSWSIPMAYAAQTGEV, WWLFAANWFWTVAYDTMYAMV, QIIGLFQIAALFCFVAAGWSA, VYGLGLLTFVGFSTYQQMLIF, and FLNNNWAGLVLFVSLGADYLF.

This sequence belongs to the UbiA prenyltransferase family. Mg(2+) serves as cofactor.

The protein resides in the cell inner membrane. It carries out the reaction all-trans-octaprenyl diphosphate + 4-hydroxybenzoate = 4-hydroxy-3-(all-trans-octaprenyl)benzoate + diphosphate. It functions in the pathway cofactor biosynthesis; ubiquinone biosynthesis. Its function is as follows. Catalyzes the prenylation of para-hydroxybenzoate (PHB) with an all-trans polyprenyl group. Mediates the second step in the final reaction sequence of ubiquinone-8 (UQ-8) biosynthesis, which is the condensation of the polyisoprenoid side chain with PHB, generating the first membrane-bound Q intermediate 3-octaprenyl-4-hydroxybenzoate. The chain is 4-hydroxybenzoate octaprenyltransferase from Shewanella oneidensis (strain ATCC 700550 / JCM 31522 / CIP 106686 / LMG 19005 / NCIMB 14063 / MR-1).